The chain runs to 395 residues: Phosphoglycerate kinase (395 aa).

Substrate-binding positions include 20–22 (DFN), Arg36, 59–62 (HLGR), Arg120, and Arg157. Residues Lys208, Gly296, Glu327, and 353–356 (GGDT) each bind ATP.

It belongs to the phosphoglycerate kinase family. As to quaternary structure, monomer.

Its subcellular location is the cytoplasm. It carries out the reaction (2R)-3-phosphoglycerate + ATP = (2R)-3-phospho-glyceroyl phosphate + ADP. The protein operates within carbohydrate degradation; glycolysis; pyruvate from D-glyceraldehyde 3-phosphate: step 2/5. This is Phosphoglycerate kinase from Tropheryma whipplei (strain TW08/27) (Whipple's bacillus).